The chain runs to 459 residues: Bifunctional protein GlmU (459 aa).

The segment at 1–229 (MTNYAIILAA…FDESLGVNDR (229 aa)) is pyrophosphorylase. Residues 8–11 (LAAG), Lys22, Gln72, and 77–78 (GT) each bind UDP-N-acetyl-alpha-D-glucosamine. Asp102 lines the Mg(2+) pocket. UDP-N-acetyl-alpha-D-glucosamine contacts are provided by Gly139, Glu154, Asn169, and Asn227. A Mg(2+)-binding site is contributed by Asn227. The segment at 230–250 (VALATAESVMRRRINQKHMVN) is linker. Residues 251 to 459 (GVSFVNPDAT…KRLPHHPQNK (209 aa)) are N-acetyltransferase. The UDP-N-acetyl-alpha-D-glucosamine site is built by Arg332 and Lys350. His362 acts as the Proton acceptor in catalysis. 2 residues coordinate UDP-N-acetyl-alpha-D-glucosamine: Tyr365 and Asn376. Residues Ala379, 385 to 386 (NY), Ser404, Ala422, and Arg439 contribute to the acetyl-CoA site.

It in the N-terminal section; belongs to the N-acetylglucosamine-1-phosphate uridyltransferase family. In the C-terminal section; belongs to the transferase hexapeptide repeat family. In terms of assembly, homotrimer. The cofactor is Mg(2+).

It localises to the cytoplasm. It catalyses the reaction alpha-D-glucosamine 1-phosphate + acetyl-CoA = N-acetyl-alpha-D-glucosamine 1-phosphate + CoA + H(+). It carries out the reaction N-acetyl-alpha-D-glucosamine 1-phosphate + UTP + H(+) = UDP-N-acetyl-alpha-D-glucosamine + diphosphate. Its pathway is nucleotide-sugar biosynthesis; UDP-N-acetyl-alpha-D-glucosamine biosynthesis; N-acetyl-alpha-D-glucosamine 1-phosphate from alpha-D-glucosamine 6-phosphate (route II): step 2/2. The protein operates within nucleotide-sugar biosynthesis; UDP-N-acetyl-alpha-D-glucosamine biosynthesis; UDP-N-acetyl-alpha-D-glucosamine from N-acetyl-alpha-D-glucosamine 1-phosphate: step 1/1. It functions in the pathway bacterial outer membrane biogenesis; LPS lipid A biosynthesis. Functionally, catalyzes the last two sequential reactions in the de novo biosynthetic pathway for UDP-N-acetylglucosamine (UDP-GlcNAc). The C-terminal domain catalyzes the transfer of acetyl group from acetyl coenzyme A to glucosamine-1-phosphate (GlcN-1-P) to produce N-acetylglucosamine-1-phosphate (GlcNAc-1-P), which is converted into UDP-GlcNAc by the transfer of uridine 5-monophosphate (from uridine 5-triphosphate), a reaction catalyzed by the N-terminal domain. The polypeptide is Bifunctional protein GlmU (Streptococcus gordonii (strain Challis / ATCC 35105 / BCRC 15272 / CH1 / DL1 / V288)).